The chain runs to 779 residues: Probable ATP-dependent RNA helicase DHX40 (779 aa).

Residues 1–53 (MSRFPAVAGRAPRRQEEGERPVELQEERPSAVRIADREEKGCTSQEGGTTPTF) form a disordered region. Residues 13–41 (RRQEEGERPVELQEERPSAVRIADREEKG) are compositionally biased toward basic and acidic residues. Polar residues predominate over residues 42–53 (CTSQEGGTTPTF). In terms of domain architecture, Helicase ATP-binding spans 63-231 (IQAVRDNSFL…FGNCPIFDIP (169 aa)). 76-83 (GNTGSGKT) serves as a coordination point for ATP. The short motif at 173 to 176 (DEAH) is the DEAH box element. Residues 263-442 (TMDIHLNEMA…SVVLTLKCLA (180 aa)) enclose the Helicase C-terminal domain.

This sequence belongs to the DEAD box helicase family. DEAH subfamily.

It carries out the reaction ATP + H2O = ADP + phosphate + H(+). Probable ATP-dependent RNA helicase. This is Probable ATP-dependent RNA helicase DHX40 (Dhx40) from Rattus norvegicus (Rat).